The chain runs to 357 residues: S-adenosylmethionine:tRNA ribosyltransferase-isomerase (357 aa).

It belongs to the QueA family. Monomer.

It localises to the cytoplasm. It catalyses the reaction 7-aminomethyl-7-carbaguanosine(34) in tRNA + S-adenosyl-L-methionine = epoxyqueuosine(34) in tRNA + adenine + L-methionine + 2 H(+). Its pathway is tRNA modification; tRNA-queuosine biosynthesis. Transfers and isomerizes the ribose moiety from AdoMet to the 7-aminomethyl group of 7-deazaguanine (preQ1-tRNA) to give epoxyqueuosine (oQ-tRNA). The protein is S-adenosylmethionine:tRNA ribosyltransferase-isomerase of Phenylobacterium zucineum (strain HLK1).